The primary structure comprises 497 residues: Probable cytosol aminopeptidase (497 aa).

2 residues coordinate Mn(2+): lysine 263 and aspartate 268. Lysine 275 is an active-site residue. Residues aspartate 286, aspartate 345, and glutamate 347 each contribute to the Mn(2+) site. Residue arginine 349 is part of the active site.

The protein belongs to the peptidase M17 family. The cofactor is Mn(2+).

The protein resides in the cytoplasm. The catalysed reaction is Release of an N-terminal amino acid, Xaa-|-Yaa-, in which Xaa is preferably Leu, but may be other amino acids including Pro although not Arg or Lys, and Yaa may be Pro. Amino acid amides and methyl esters are also readily hydrolyzed, but rates on arylamides are exceedingly low.. It carries out the reaction Release of an N-terminal amino acid, preferentially leucine, but not glutamic or aspartic acids.. In terms of biological role, presumably involved in the processing and regular turnover of intracellular proteins. Catalyzes the removal of unsubstituted N-terminal amino acids from various peptides. The chain is Probable cytosol aminopeptidase from Sinorhizobium fredii (strain NBRC 101917 / NGR234).